A 301-amino-acid polypeptide reads, in one-letter code: ATP synthase gamma chain (301 aa).

Belongs to the ATPase gamma chain family. In terms of assembly, F-type ATPases have 2 components, CF(1) - the catalytic core - and CF(0) - the membrane proton channel. CF(1) has five subunits: alpha(3), beta(3), gamma(1), delta(1), epsilon(1). CF(0) has three main subunits: a, b and c.

It localises to the cell inner membrane. Functionally, produces ATP from ADP in the presence of a proton gradient across the membrane. The gamma chain is believed to be important in regulating ATPase activity and the flow of protons through the CF(0) complex. The chain is ATP synthase gamma chain from Bordetella parapertussis (strain 12822 / ATCC BAA-587 / NCTC 13253).